A 344-amino-acid polypeptide reads, in one-letter code: Dihydroorotase (344 aa).

Residues His13 and His15 each contribute to the Zn(2+) site. Residues 15-17 (HFR) and Asn41 each bind substrate. Lys98, His135, and His173 together coordinate Zn(2+). An N6-carboxylysine modification is found at Lys98. His135 provides a ligand contact to substrate. Residue Leu218 coordinates substrate. Asp246 serves as a coordination point for Zn(2+). Asp246 is an active-site residue. Residues His250 and Ala262 each contribute to the substrate site.

Belongs to the metallo-dependent hydrolases superfamily. DHOase family. Class II DHOase subfamily. As to quaternary structure, homodimer. It depends on Zn(2+) as a cofactor.

It catalyses the reaction (S)-dihydroorotate + H2O = N-carbamoyl-L-aspartate + H(+). It participates in pyrimidine metabolism; UMP biosynthesis via de novo pathway; (S)-dihydroorotate from bicarbonate: step 3/3. Functionally, catalyzes the reversible cyclization of carbamoyl aspartate to dihydroorotate. The sequence is that of Dihydroorotase from Pseudoalteromonas atlantica (strain T6c / ATCC BAA-1087).